The chain runs to 489 residues: 3-octaprenyl-4-hydroxybenzoate carboxy-lyase (489 aa).

Asparagine 172 lines the Mn(2+) pocket. Prenylated FMN contacts are provided by residues 175-177 (IYR), 189-191 (RWL), and 194-195 (RG). Mn(2+) is bound at residue glutamate 238. The Proton donor role is filled by aspartate 287.

The protein belongs to the UbiD family. As to quaternary structure, homohexamer. Prenylated FMN is required as a cofactor. Requires Mn(2+) as cofactor.

Its subcellular location is the cell membrane. The enzyme catalyses a 4-hydroxy-3-(all-trans-polyprenyl)benzoate + H(+) = a 2-(all-trans-polyprenyl)phenol + CO2. The protein operates within cofactor biosynthesis; ubiquinone biosynthesis. Its function is as follows. Catalyzes the decarboxylation of 3-octaprenyl-4-hydroxy benzoate to 2-octaprenylphenol, an intermediate step in ubiquinone biosynthesis. The protein is 3-octaprenyl-4-hydroxybenzoate carboxy-lyase of Aeromonas salmonicida (strain A449).